We begin with the raw amino-acid sequence, 341 residues long: tRNA uridine(34) hydroxylase (341 aa).

The region spanning 139-233 is the Rhodanese domain; that stretch reads SDPEVVLVDT…YLEEVPSTET (95 aa). Catalysis depends on Cys193, which acts as the Cysteine persulfide intermediate. Basic and acidic residues-rich tracts occupy residues 306–316 and 324–341; these read SLAEERGESHI and IEER…QANK. Residues 306–341 form a disordered region; it reads SLAEERGESHIGGDIQNIIEERRQEKNDKKAKQANK.

This sequence belongs to the TrhO family.

It catalyses the reaction uridine(34) in tRNA + AH2 + O2 = 5-hydroxyuridine(34) in tRNA + A + H2O. Its function is as follows. Catalyzes oxygen-dependent 5-hydroxyuridine (ho5U) modification at position 34 in tRNAs. The chain is tRNA uridine(34) hydroxylase from Colwellia psychrerythraea (strain 34H / ATCC BAA-681) (Vibrio psychroerythus).